We begin with the raw amino-acid sequence, 111 residues long: Parvalbumin alpha (111 aa).

Threonine 1 bears the N-acetylthreonine; in form C2 mark. 2 EF-hand domains span residues 40–75 and 79–111; these read KPDDTLKEVFGILDQDKSGYIEEEELKFVLKGFAAG and LTANETKALLKAGDQDGDDKIGVDEFTNLVKAA. 11 residues coordinate Ca(2+): aspartate 53, aspartate 55, serine 57, tyrosine 59, glutamate 61, glutamate 64, aspartate 92, aspartate 94, aspartate 96, lysine 98, and glutamate 103.

This sequence belongs to the parvalbumin family. Post-translationally, acetylation of Thr-1 converts C1 to C2.

In muscle, parvalbumin is thought to be involved in relaxation after contraction. It binds two calcium ions. In Latimeria chalumnae (Coelacanth), this protein is Parvalbumin alpha.